Reading from the N-terminus, the 234-residue chain is Mannose/glucose-specific lectin Cramoll (234 aa).

The Mn(2+) site is built by Glu8 and Asp10. Residues Asp10, Tyr12, Asn14, and Asp19 each contribute to the Ca(2+) site. Tyr12 contributes to the a carbohydrate binding site. Mn(2+) is bound by residues Asp19, His24, and Ser34. Position 99-100 (99-100 (LY)) interacts with a carbohydrate. Ca(2+) is bound at residue Asp205. An a carbohydrate-binding site is contributed by Arg225.

Belongs to the leguminous lectin family. As to quaternary structure, homotetramer. The alpha and beta chains are produced by partial proteolytic processing of the lectin precursor by an asparaginyl endopeptidase.

Functionally, glucose/D-mannose specific lectin. This is Mannose/glucose-specific lectin Cramoll from Cratylia mollis (Camaratu bean).